Here is a 1598-residue protein sequence, read N- to C-terminus: Fatty acid synthase subunit alpha (1598 aa).

The interval 96–134 is disordered; the sequence is RTQPHKSSAPQEPVPKAAPKAAPPVPVATAPLPEPGRQV. A compositionally biased stretch (low complexity) spans 104-115; the sequence is APQEPVPKAAPK. A Carrier domain is found at 143–221; it reads DVPIQSRDVI…QIVSGSTSTT (79 aa). S181 is subject to O-(pantetheine 4'-phosphoryl)serine. A ketoreductase (KR) domain region spans residues 543–784; the sequence is LKGKTVLLTG…LAALLVNPFA (242 aa). Residues 818-844 are disordered; sequence KQDSTSTPTHQHLPSHHHVDEPEIGKP. The span at 820–829 shows a compositional bias: polar residues; that stretch reads DSTSTPTHQH. The 533-residue stretch at 992 to 1524 folds into the Ketosynthase family 3 (KS3) domain; it reads HEIVLTRDLA…QKGAQAIIVH (533 aa). The active-site For beta-ketoacyl synthase activity is C1175. The tract at residues 1280–1301 is disordered; the sequence is ASDKTGRSVPSPGKGTLTNARE. Residues H1409 and H1450 each act as for beta-ketoacyl synthase activity in the active site.

This sequence belongs to the thiolase-like superfamily. Fungal fatty acid synthetase subunit alpha family. In terms of assembly, fatty acid synthase is composed of alpha and beta subunits.

The enzyme catalyses acetyl-CoA + n malonyl-CoA + 2n NADPH + 4n H(+) = a long-chain-acyl-CoA + n CoA + n CO2 + 2n NADP(+).. It carries out the reaction a fatty acyl-[ACP] + malonyl-[ACP] + H(+) = a 3-oxoacyl-[ACP] + holo-[ACP] + CO2. The catalysed reaction is a (3R)-hydroxyacyl-[ACP] + NADP(+) = a 3-oxoacyl-[ACP] + NADPH + H(+). It functions in the pathway mycotoxin biosynthesis. Functionally, fatty acid synthase subunit alpha; part of the gene cluster that mediates the biosynthesis of gramillins A and B, bicyclic lipopeptides that induce cell death in maize leaves but not in wheat leaves. The nonribosomal peptide synthetase GRA1 incorporates respectively a glutamic adic (Glu), a leucine (Leu), a serine (Ser), a hydroxyglutamine (HOGln), a 2-amino decanoic acid, and 2 cysteins (CysB and CysA). The biosynthesis of 2-amino decanoic acid incorporated in gramillins could be initiated by a fatty acid synthase composed of the alpha and beta subunits FGSG_00036 and FGSG_11656. The cytochrome P450 monooxygenase FGSG_15680 could hydroxylate the fatty acid chain. Subsequent oxidation to the ketone by the oxidoreductase FGSG_00048 and transamination by aminotransferase FGSG_00049 could form 2-amino-decanoic acid. On the other hand, FGSG_15680 could also be responsible for the HO-modified glutamine at the gamma-position. Whether hydroxylation occurs on the fully assembled product or on the Gln residue prior to assembly into the gramillins requires further proof. The thioredoxin FGSG_00043 could also be required for the disulfide-bond formation between CysA and CysB. The specific involvement of the remaining proteins from the cluster is more difficult to discern, but could have broader regulatory (FGSG_00040 and FGSG_11657) or enzymatic functions (FGSG_00044 and FGSG_00045). The final C-domain of GRA1 does not possess the expected sequence of a termination CT domain, often implicated in macrocyclization and release of a cyclopeptidein fungal NRPs; and the thioesterase FGSG_00047 may act in concert with the terminal C-domain of GRA1 to catalyze the formation of the macrocyclic anhydride and release of the products. The chain is Fatty acid synthase subunit alpha from Gibberella zeae (strain ATCC MYA-4620 / CBS 123657 / FGSC 9075 / NRRL 31084 / PH-1) (Wheat head blight fungus).